Here is a 705-residue protein sequence, read N- to C-terminus: Polyribonucleotide nucleotidyltransferase (705 aa).

D494 and D500 together coordinate Mg(2+). The KH domain maps to 561-620 (PRITTVKVKPEKVRAVIGTGGKNIRQIVSETGVTIDVEDDGTVTIASSDMEASARAIAMV). Residues 630 to 698 (GKIYRGTVKK…KQGKIRLSRK (69 aa)) form the S1 motif domain.

The protein belongs to the polyribonucleotide nucleotidyltransferase family. Mg(2+) serves as cofactor.

It is found in the cytoplasm. The enzyme catalyses RNA(n+1) + phosphate = RNA(n) + a ribonucleoside 5'-diphosphate. In terms of biological role, involved in mRNA degradation. Catalyzes the phosphorolysis of single-stranded polyribonucleotides processively in the 3'- to 5'-direction. This is Polyribonucleotide nucleotidyltransferase from Syntrophus aciditrophicus (strain SB).